Here is a 449-residue protein sequence, read N- to C-terminus: Packaging protein 1 (449 aa).

The segment at 1–77 (METRGRRPAA…QPAKRGDMLD (77 aa)) is disordered. An ATP-binding site is contributed by 171–178 (GPTGCGKS). Residues 440–449 (RAYRARKTPK) are DNA-binding.

The protein belongs to the adenoviridae packaging protein 1 family. In terms of assembly, homodimer. Part of a genome packaging complex composed of packaging proteins 1, 2 and 3; this complex specifically binds to the packaging sequence on the left end of viral genomic DNA and performs packaging of the viral genome. Interacts with protein 33K.

It localises to the virion. The protein resides in the host nucleus. The protein localises to the host nucleoplasm. Its subcellular location is the host nucleolus. In terms of biological role, component of the packaging machinery which encapsidates the viral DNA into preformed capsids and transcriptional activator of the viral major late promoter (MLP). Binds, along with packaging proteins 2 and 3, to the specific packaging sequence on the left end of viral genomic DNA and displays ATPase activity thereby providing the power stroke of the packaging machinery. The activity of packaging protein IVa2 is stimulated by protein 33K which acts as a terminase. May be the protein that pumps DNA into the capsid powered by ATP hydrolysis. Specifically binds to the 5'-CG-3' nucleotides of the repeats making up the packaging sequence. Component of the DEF-A and DEF-B transcription factors that bind downstream elements of the major late promoter (MLP), and stimulate transcription from the MLP after initiation of viral DNA replication. DEF-A is a heterodimer packaging proteins 1 and 2 and DEF-B is a homodimer of packaging protein 1. This chain is Packaging protein 1, found in Homo sapiens (Human).